A 330-amino-acid polypeptide reads, in one-letter code: Diacylglycerol acyltransferase/mycolyltransferase Ag85B (330 aa).

The N-terminal stretch at 1–40 (MTDLSEKVRAWGRRLLVGAAAAVTLPGLIGLAGGAATANA) is a signal peptide. 82–83 (LR) provides a ligand contact to substrate. Positions 98–108 (FEWYYQSGLSV) are fibronectin-binding. An intrachain disulfide couples Cys-127 to Cys-132. The substrate site is built by Ser-166 and Asp-194. The Nucleophile role is filled by Ser-166. Glu-270 is an active-site residue. Residues 272–275 (FVRS), Lys-279, and 302–304 (HSW) contribute to the substrate site. Residue His-302 is part of the active site.

This sequence belongs to the mycobacterial A85 antigen family.

Its subcellular location is the secreted. The enzyme catalyses 2 alpha,alpha'-trehalose 6-mycolate = alpha,alpha'-trehalose 6,6'-bismycolate + alpha,alpha-trehalose. The catalysed reaction is an acyl-CoA + a 1,2-diacyl-sn-glycerol = a triacyl-sn-glycerol + CoA. The antigen 85 proteins (FbpA, FbpB, FbpC) are responsible for the high affinity of mycobacteria for fibronectin, a large adhesive glycoprotein, which facilitates the attachment of M.tuberculosis to murine alveolar macrophages (AMs). They also help to maintain the integrity of the cell wall by catalyzing the transfer of mycolic acids to cell wall arabinogalactan and through the synthesis of alpha,alpha-trehalose dimycolate (TDM, cord factor). They catalyze the transfer of a mycoloyl residue from one molecule of alpha,alpha-trehalose monomycolate (TMM) to another TMM, leading to the formation of TDM. In Mycobacterium avium, this protein is Diacylglycerol acyltransferase/mycolyltransferase Ag85B (fbpB).